Reading from the N-terminus, the 712-residue chain is UvrABC system protein B (712 aa).

A Helicase ATP-binding domain is found at 35 to 421 (RRVQAGEKDV…SDGAVEQIIR (387 aa)). Residue 48 to 55 (GATGTGKS) participates in ATP binding. The Beta-hairpin motif lies at 101–124 (YYDYYQPEAYVPQSDTYIEKDSSI). One can recognise a Helicase C-terminal domain in the interval 438–604 (QIDDLVHEIR…PLRKKINDIV (167 aa)). The tract at residues 625 to 655 (TKEGKGAKAPVPALGGQKTGGAKAARGRAKE) is disordered. A UVR domain is found at 667-702 (AEQIEDLTTRMRAAAADLQFEIAARLRDEVSEMKKE).

Belongs to the UvrB family. As to quaternary structure, forms a heterotetramer with UvrA during the search for lesions. Interacts with UvrC in an incision complex.

It localises to the cytoplasm. Functionally, the UvrABC repair system catalyzes the recognition and processing of DNA lesions. A damage recognition complex composed of 2 UvrA and 2 UvrB subunits scans DNA for abnormalities. Upon binding of the UvrA(2)B(2) complex to a putative damaged site, the DNA wraps around one UvrB monomer. DNA wrap is dependent on ATP binding by UvrB and probably causes local melting of the DNA helix, facilitating insertion of UvrB beta-hairpin between the DNA strands. Then UvrB probes one DNA strand for the presence of a lesion. If a lesion is found the UvrA subunits dissociate and the UvrB-DNA preincision complex is formed. This complex is subsequently bound by UvrC and the second UvrB is released. If no lesion is found, the DNA wraps around the other UvrB subunit that will check the other stand for damage. This chain is UvrABC system protein B, found in Streptomyces coelicolor (strain ATCC BAA-471 / A3(2) / M145).